The chain runs to 341 residues: tRNA N6-adenosine threonylcarbamoyltransferase (341 aa).

Residues H115 and H119 each contribute to the Fe cation site. Residues 138–142 (LVSGG), D171, G184, and N276 contribute to the substrate site. D304 lines the Fe cation pocket.

This sequence belongs to the KAE1 / TsaD family. The cofactor is Fe(2+).

It localises to the cytoplasm. It carries out the reaction L-threonylcarbamoyladenylate + adenosine(37) in tRNA = N(6)-L-threonylcarbamoyladenosine(37) in tRNA + AMP + H(+). Its function is as follows. Required for the formation of a threonylcarbamoyl group on adenosine at position 37 (t(6)A37) in tRNAs that read codons beginning with adenine. Is involved in the transfer of the threonylcarbamoyl moiety of threonylcarbamoyl-AMP (TC-AMP) to the N6 group of A37, together with TsaE and TsaB. TsaD likely plays a direct catalytic role in this reaction. This chain is tRNA N6-adenosine threonylcarbamoyltransferase, found in Stenotrophomonas maltophilia (strain R551-3).